The primary structure comprises 269 residues: MRPIIETHSVTMRINGATLVDGIDLSVGSGEMVAIVGPNGAGKSTLLRLLSGDLQPTQGRIELKQADLRSYSAAQLATHRATLSQHVNVTFPFTVEEIVRMGAGDMAIAAAHPLVESAMDEVAIRPLRSRQLPTLSGGEQQRTHFARVLVQLACGEARHGPGLLLLDEPTSSLDLRHQIELVEIAGRRARNGTAVIAILHDLNLAVRFASRIIVIHRGAIVADGPPAQTITDGLIRKVFEVCADIQYHGDGSPVLLPQAMKSIGPGNLL.

In terms of domain architecture, ABC transporter spans 5–242 (IETHSVTMRI…GLIRKVFEVC (238 aa)). 37–44 (GPNGAGKS) is a binding site for ATP.

The protein belongs to the ABC transporter superfamily. Heme (hemin) importer (TC 3.A.1.14.5) family. In terms of assembly, the complex is composed of two ATP-binding proteins (HmuV), two transmembrane proteins (HmuU) and a solute-binding protein (HmuT).

The protein localises to the cell inner membrane. In terms of biological role, part of the ABC transporter complex HmuTUV involved in hemin import. Responsible for energy coupling to the transport system. This chain is Hemin import ATP-binding protein HmuV, found in Nitrobacter winogradskyi (strain ATCC 25391 / DSM 10237 / CIP 104748 / NCIMB 11846 / Nb-255).